A 318-amino-acid polypeptide reads, in one-letter code: Malate dehydrogenase (318 aa).

Residues 10-15 (GGGQIG) and Asp34 contribute to the NAD(+) site. Substrate-binding residues include Arg83 and Arg89. Residues Asn96 and 119–121 (LSN) contribute to the NAD(+) site. 2 residues coordinate substrate: Asn121 and Arg152. His176 acts as the Proton acceptor in catalysis.

It belongs to the LDH/MDH superfamily. MDH type 3 family.

It carries out the reaction (S)-malate + NAD(+) = oxaloacetate + NADH + H(+). In terms of biological role, catalyzes the reversible oxidation of malate to oxaloacetate. The polypeptide is Malate dehydrogenase (Syntrophotalea carbinolica (strain DSM 2380 / NBRC 103641 / GraBd1) (Pelobacter carbinolicus)).